The chain runs to 150 residues: 1,4-dihydroxy-2-naphthoyl-CoA hydrolase (150 aa).

Asp22 is an active-site residue.

The protein belongs to the 4-hydroxybenzoyl-CoA thioesterase family. DHNA-CoA hydrolase subfamily.

It catalyses the reaction 1,4-dihydroxy-2-naphthoyl-CoA + H2O = 1,4-dihydroxy-2-naphthoate + CoA + H(+). It participates in cofactor biosynthesis; phylloquinone biosynthesis. Its pathway is quinol/quinone metabolism; 1,4-dihydroxy-2-naphthoate biosynthesis; 1,4-dihydroxy-2-naphthoate from chorismate: step 7/7. Functionally, catalyzes the hydrolysis of 1,4-dihydroxy-2-naphthoyl-CoA (DHNA-CoA) to 1,4-dihydroxy-2-naphthoate (DHNA), a reaction involved in phylloquinone (vitamin K1) biosynthesis. This chain is 1,4-dihydroxy-2-naphthoyl-CoA hydrolase, found in Prochlorococcus marinus (strain NATL1A).